The sequence spans 300 residues: N-acetylmuramic acid 6-phosphate etherase 1 (300 aa).

The region spanning 59–222 (AAERFKKGGR…STGIMVKVGN (164 aa)) is the SIS domain. The active-site Proton donor is the Glu-87. The active site involves Glu-118.

It belongs to the GCKR-like family. MurNAc-6-P etherase subfamily. Homodimer.

The enzyme catalyses N-acetyl-D-muramate 6-phosphate + H2O = N-acetyl-D-glucosamine 6-phosphate + (R)-lactate. It participates in amino-sugar metabolism; N-acetylmuramate degradation. In terms of biological role, specifically catalyzes the cleavage of the D-lactyl ether substituent of MurNAc 6-phosphate, producing GlcNAc 6-phosphate and D-lactate. In Enterococcus faecalis (strain ATCC 700802 / V583), this protein is N-acetylmuramic acid 6-phosphate etherase 1.